The primary structure comprises 103 residues: Growth-regulated alpha protein (103 aa).

Residues 1 to 30 form the signal peptide; the sequence is MARAANPAPRLLGAAMLLLLLVAAGRRAAG. Cystine bridges form between cysteine 39–cysteine 65 and cysteine 41–cysteine 81.

Belongs to the intercrine alpha (chemokine CxC) family.

The protein resides in the secreted. Functionally, has chemotactic activity for neutrophils. The chain is Growth-regulated alpha protein (CXCL1) from Ovis aries (Sheep).